Reading from the N-terminus, the 388-residue chain is Succinate--CoA ligase [ADP-forming] subunit beta (388 aa).

Residues 9 to 244 (KQLFARYGLP…QSQEDPREAQ (236 aa)) form the ATP-grasp domain. Residues lysine 46, 53 to 55 (GRG), glutamate 99, threonine 102, and glutamate 107 each bind ATP. Mg(2+)-binding residues include asparagine 199 and aspartate 213. Residues asparagine 264 and 321 to 323 (GIV) contribute to the substrate site.

Belongs to the succinate/malate CoA ligase beta subunit family. As to quaternary structure, heterotetramer of two alpha and two beta subunits. Requires Mg(2+) as cofactor.

It catalyses the reaction succinate + ATP + CoA = succinyl-CoA + ADP + phosphate. The catalysed reaction is GTP + succinate + CoA = succinyl-CoA + GDP + phosphate. The protein operates within carbohydrate metabolism; tricarboxylic acid cycle; succinate from succinyl-CoA (ligase route): step 1/1. Succinyl-CoA synthetase functions in the citric acid cycle (TCA), coupling the hydrolysis of succinyl-CoA to the synthesis of either ATP or GTP and thus represents the only step of substrate-level phosphorylation in the TCA. The beta subunit provides nucleotide specificity of the enzyme and binds the substrate succinate, while the binding sites for coenzyme A and phosphate are found in the alpha subunit. The protein is Succinate--CoA ligase [ADP-forming] subunit beta of Salmonella choleraesuis (strain SC-B67).